Reading from the N-terminus, the 640-residue chain is Threonine--tRNA ligase (640 aa).

The region spanning 1-61 (MPAITLPDGS…DADARLRFIT (61 aa)) is the TGS domain. The interval 243–536 (DHRKIGRQMD…LIENCAGRFP (294 aa)) is catalytic. Residues cysteine 336, histidine 387, and histidine 513 each coordinate Zn(2+).

Belongs to the class-II aminoacyl-tRNA synthetase family. Homodimer. Zn(2+) is required as a cofactor.

It localises to the cytoplasm. It carries out the reaction tRNA(Thr) + L-threonine + ATP = L-threonyl-tRNA(Thr) + AMP + diphosphate + H(+). In terms of biological role, catalyzes the attachment of threonine to tRNA(Thr) in a two-step reaction: L-threonine is first activated by ATP to form Thr-AMP and then transferred to the acceptor end of tRNA(Thr). Also edits incorrectly charged L-seryl-tRNA(Thr). The chain is Threonine--tRNA ligase from Acidiphilium cryptum (strain JF-5).